Here is a 208-residue protein sequence, read N- to C-terminus: Imidazoleglycerol-phosphate dehydratase (208 aa).

Belongs to the imidazoleglycerol-phosphate dehydratase family.

The protein resides in the cytoplasm. The enzyme catalyses D-erythro-1-(imidazol-4-yl)glycerol 3-phosphate = 3-(imidazol-4-yl)-2-oxopropyl phosphate + H2O. It participates in amino-acid biosynthesis; L-histidine biosynthesis; L-histidine from 5-phospho-alpha-D-ribose 1-diphosphate: step 6/9. The sequence is that of Imidazoleglycerol-phosphate dehydratase from Pseudarthrobacter chlorophenolicus (strain ATCC 700700 / DSM 12829 / CIP 107037 / JCM 12360 / KCTC 9906 / NCIMB 13794 / A6) (Arthrobacter chlorophenolicus).